Reading from the N-terminus, the 336-residue chain is MLPFLPEPSLSYTQQNRTAVLLLNLGTPDAPTAQAVRPYLKSFLTDRRIVELPKWLWYPILHGLVLTFRPKKSAHAYEKIWFKEGSPLEVYTARQAAALAERMPDLIVRHAMTYGNPSIADVLAELKSQGVGRLLAIPLYPQYAASSSGAAVDKVCEQLLLQRNQMSVRTISRFYDDAGYIDAMKNHILRYWAEHGRGKKLMLSFHGVPQKHYDLGDPYPDECRHTAKLLAEALELTEDEYTVSFQSQFGRAKWVTPSTQDLFGKLPKQGVTELDVFCPGFLADCLETMEEIALMGREQFYEAGGKNYRYIPCLNDNPDWIDALVALAEENLGGWR.

Residues His-206 and Glu-287 each contribute to the Fe cation site.

This sequence belongs to the ferrochelatase family.

The protein localises to the cytoplasm. The enzyme catalyses heme b + 2 H(+) = protoporphyrin IX + Fe(2+). Its pathway is porphyrin-containing compound metabolism; protoheme biosynthesis; protoheme from protoporphyrin-IX: step 1/1. Catalyzes the ferrous insertion into protoporphyrin IX. In Neisseria gonorrhoeae (strain ATCC 700825 / FA 1090), this protein is Ferrochelatase.